The chain runs to 179 residues: MSNKEQKDMKKSGKHQRVHKTLPSDDFKNSDAVNPADKPAVGTSGMGSHSSGSDMQEAREPVQKKMQDFKGDDGTGLLMEKRKQFEEDVNASFRSLNENLQSILKAQQNSRQELKSLYCERFGSVYHNWLVEMDRTRDQEEYFSFITQQQMKILQTAIEDHETKLKNAKDMCDTFLKVW.

Basic and acidic residues predominate over residues 1–11; it reads MSNKEQKDMKK. A disordered region spans residues 1–75; the sequence is MSNKEQKDMK…MQDFKGDDGT (75 aa). The segment covering 42-53 has biased composition (low complexity); sequence GTSGMGSHSSGS. The span at 56-75 shows a compositional bias: basic and acidic residues; sequence QEAREPVQKKMQDFKGDDGT. Positions 146–175 form a coiled coil; sequence ITQQQMKILQTAIEDHETKLKNAKDMCDTF.

It belongs to the XLR/SYCP3 family. As to expression, expressed in testis (at protein level). Also expressed in ovary. Not detected in other tissues tested.

It localises to the nucleus. The protein resides in the chromosome. The protein is X-linked lymphocyte-regulated protein 5C of Mus musculus (Mouse).